A 2550-amino-acid polypeptide reads, in one-letter code: Highly reducing polyketide synthase otaA (2550 aa).

A Ketosynthase family 3 (KS3) domain is found at 9-431; sequence SEPLAIIGLA…GTNAHAVVED (423 aa). Residues Cys-182, His-317, and His-355 each act as for beta-ketoacyl synthase activity in the active site. The interval 572–894 is malonyl-CoA:ACP transacylase (MAT) domain; sequence FVFTGQGANW…KRYETNGSTI (323 aa). The N-terminal hotdog fold stretch occupies residues 959-1094; sequence HELLGVPVED…GSVRAETGPP (136 aa). Residues 959–1252 form a dehydratase (DH) domain region; sequence HELLGVPVED…DLVQLPANND (294 aa). The PKS/mFAS DH domain maps to 959–1253; that stretch reads HELLGVPVED…LVQLPANNDD (295 aa). A C-terminal hotdog fold region spans residues 1107 to 1253; that stretch reads AEPVDIAQMY…LVQLPANNDD (147 aa). S-adenosyl-L-methionine contacts are provided by Ile-1420 and Glu-1442. The interval 1433–1612 is methyltransferase (CMeT) domain; that stretch reads HAQTGIKILE…GLRPRLIIND (180 aa). An enoyl reductase (ER) (ER) domain region spans residues 1859-1919; that stretch reads PDEVKIRIHA…DQVMALRTGP (61 aa). The tract at residues 2166–2345 is ketoreductase (KR) domain; the sequence is ASYLLIGGFG…PATSVSLGSV (180 aa). Residues 2454 to 2531 enclose the Carrier domain; the sequence is AAVEVVTRAI…QLAQQAADAS (78 aa). Ser-2491 carries the post-translational modification O-(pantetheine 4'-phosphoryl)serine.

Pantetheine 4'-phosphate serves as cofactor.

The enzyme catalyses 4 malonyl-CoA + acetyl-CoA + 5 NADPH + 9 H(+) = 7-methylmellein + 3 CO2 + 5 NADP(+) + 5 CoA + 4 H2O. It participates in mycotoxin biosynthesis. Highly reducing polyketide synthase; part of the gene cluster that mediates the biosynthesis of ochratoxin A (OTA), a mycotoxin composed of a chlorinated type I polyketide dihydroisocoumarin moiety linked to L-phenylalanine, and demonstrated to have nephrotoxic, immunotoxic, genotoxic, neurotoxic, and teratogenic properties. OtaA catalyzes the condensation of one acetate and 4 malonate units to form the isocoumarin group. The pathway begins with the highly reducing polyketide synthase otaA that catalyzes the formation of the isocoumarin group during the initial stages of biosynthesis, starting from one acetate and 4 malonate units, to originate the characteristic pentaketide skeleton 7-methylmellein (7-MM) of the OTA molecule. The newly identified cyclase otaY might be involved in the polyketide cyclization reaction during the initial steps of the OTA biosynthesis. 7-MM is then oxidized into 7-carboxymellein (also called ochratoxin beta) by the cytochrome P450 monooxygenase otaC. The NRPS encoded by the otaB gene is involved in the linking of phenylalanine to the dihydroisocoumarin ring. The reaction catalyzed by NRPS results in the production of ochratoxin B (OTB), which is the non-chlorinated analog of OTA and which subsequently serves as the substrate of the halogenase otaD for chlorination activity to form the final molecular structure of OTA, containing a chlorine atom in the C-5 position of the molecule. This is Highly reducing polyketide synthase otaA from Aspergillus niger (strain ATCC MYA-4892 / CBS 513.88 / FGSC A1513).